Consider the following 284-residue polypeptide: Cysteine-rich repeat secretory protein 8 (284 aa).

The first 27 residues, 1–27, serve as a signal peptide directing secretion; sequence MATFIRFTAPLFCFFFLFSLFSHQTMS. Gnk2-homologous domains follow at residues 32 to 136 and 151 to 259; these read MATF…NVSF and SLAT…TTGL.

The protein belongs to the cysteine-rich repeat secretory protein family.

It is found in the secreted. This Arabidopsis thaliana (Mouse-ear cress) protein is Cysteine-rich repeat secretory protein 8 (CRRSP8).